Here is a 334-residue protein sequence, read N- to C-terminus: MKLSDFDYYLPEELIAQKPVEPRDASRLMVLNRKEKKIEHKIFRNIVEYLHEGDLLVRNVTKVIPARIYGRKETGAKIEVLLLEKISENVWEALVKPGSKVKKGTKIYFDDESYCVCLDWGDEGSRILEFNITEEELFKLGEAPLPPYVKNKVSFERYQTIYSRETGSVAAPTAGLHFTEDLLKKLEEKGVEFADLVLHVGLGTFRPVKVENITEHKMHSESYYVPNETVKKIFETKKNGGRIVAVGTTSVRTLETIVRLERKESYHGKTDIFIYPPFEFKLVDALITNFHLPKSTLLMLVSAFAGREFIMEAYNIAVKMKYRFFSFGNACFIY.

Belongs to the QueA family. As to quaternary structure, monomer.

It is found in the cytoplasm. The catalysed reaction is 7-aminomethyl-7-carbaguanosine(34) in tRNA + S-adenosyl-L-methionine = epoxyqueuosine(34) in tRNA + adenine + L-methionine + 2 H(+). The protein operates within tRNA modification; tRNA-queuosine biosynthesis. Its function is as follows. Transfers and isomerizes the ribose moiety from AdoMet to the 7-aminomethyl group of 7-deazaguanine (preQ1-tRNA) to give epoxyqueuosine (oQ-tRNA). In Thermosipho melanesiensis (strain DSM 12029 / CIP 104789 / BI429), this protein is S-adenosylmethionine:tRNA ribosyltransferase-isomerase.